Here is a 391-residue protein sequence, read N- to C-terminus: Histamine H4 receptor (391 aa).

The Extracellular portion of the chain corresponds to 1-19; that stretch reads MSESNGTDVLPLTAQVPLA. Residue Asn-5 is glycosylated (N-linked (GlcNAc...) asparagine). Residues 20-40 form a helical membrane-spanning segment; it reads FLMSLLAFAITIGNAVVILAF. The Cytoplasmic portion of the chain corresponds to 41-52; sequence VADRNLRHRSNY. The helical transmembrane segment at 53–73 threads the bilayer; that stretch reads FFLNLAISDFFVGVISIPLYI. The Extracellular segment spans residues 74–87; the sequence is PHTLFNWNFGSGIC. Cys-87 and Cys-166 form a disulfide bridge. Residues 88-108 traverse the membrane as a helical segment; it reads MFWLITDYLLCTASVYSIVLI. Residues 109–131 lie on the Cytoplasmic side of the membrane; that stretch reads SYDRYQSVSNAVRYRAQHTGILK. The chain crosses the membrane as a helical span at residues 132–152; sequence IVAQMVAVWILAFLVNGPMIL. At 153–174 the chain is on the extracellular side; sequence ASDSWKNSTNTEECEPGFVTEW. Asn-159 is a glycosylation site (N-linked (GlcNAc...) asparagine). Residues 175 to 195 form a helical membrane-spanning segment; the sequence is YILAITAFLEFLLPVSLVVYF. The Cytoplasmic portion of the chain corresponds to 196–306; sequence SVQIYWSLWK…LLRGRKLARS (111 aa). Residues 307–327 traverse the membrane as a helical segment; sequence LAVLLSAFAICWAPYCLFTIV. At 328–343 the chain is on the extracellular side; that stretch reads LSTYRRGERPKSIWYS. Residues 344–364 form a helical membrane-spanning segment; sequence IAFWLQWFNSLINPFLYPLCH. Over 365–391 the chain is Cytoplasmic; it reads RRFQKAFWKILCVTKQPAPSQTQSVSS.

This sequence belongs to the G-protein coupled receptor 1 family. As to quaternary structure, interacts with TSPAN4.

It localises to the cell membrane. Functionally, the H4 subclass of histamine receptors could mediate the histamine signals in peripheral tissues. Displays a significant level of constitutive activity (spontaneous activity in the absence of agonist). The polypeptide is Histamine H4 receptor (Hrh4) (Rattus norvegicus (Rat)).